The sequence spans 302 residues: Deoxyhypusine hydroxylase (302 aa).

M1 is subject to N-acetylmethionine. 5 HEAT-like PBS-type repeats span residues L54–D80, V87–D113, E175–C201, F206–R232, and V239–D265. Residues H56, H89, and E90 each contribute to the Fe cation site. 3 residues coordinate Fe cation: H208, H241, and E242.

It belongs to the deoxyhypusine hydroxylase family. Fe(2+) serves as cofactor.

It carries out the reaction [eIF5A protein]-deoxyhypusine + AH2 + O2 = [eIF5A protein]-hypusine + A + H2O. It functions in the pathway protein modification; eIF5A hypusination. Functionally, catalyzes the hydroxylation of the N(6)-(4-aminobutyl)-L-lysine intermediate produced by deoxyhypusine synthase/DHPS on a critical lysine of the eukaryotic translation initiation factor 5A/eIF-5A. This is the second step of the post-translational modification of that lysine into an unusual amino acid residue named hypusine. Hypusination is unique to mature eIF-5A factor and is essential for its function. This chain is Deoxyhypusine hydroxylase (Dohh), found in Rattus norvegicus (Rat).